The sequence spans 515 residues: Bifunctional purine biosynthesis protein PurH (515 aa).

The MGS-like domain maps to 1-145; sequence MTKRALISVS…KNHASVTVVV (145 aa).

The protein belongs to the PurH family.

The catalysed reaction is (6R)-10-formyltetrahydrofolate + 5-amino-1-(5-phospho-beta-D-ribosyl)imidazole-4-carboxamide = 5-formamido-1-(5-phospho-D-ribosyl)imidazole-4-carboxamide + (6S)-5,6,7,8-tetrahydrofolate. The enzyme catalyses IMP + H2O = 5-formamido-1-(5-phospho-D-ribosyl)imidazole-4-carboxamide. It functions in the pathway purine metabolism; IMP biosynthesis via de novo pathway; 5-formamido-1-(5-phospho-D-ribosyl)imidazole-4-carboxamide from 5-amino-1-(5-phospho-D-ribosyl)imidazole-4-carboxamide (10-formyl THF route): step 1/1. The protein operates within purine metabolism; IMP biosynthesis via de novo pathway; IMP from 5-formamido-1-(5-phospho-D-ribosyl)imidazole-4-carboxamide: step 1/1. The polypeptide is Bifunctional purine biosynthesis protein PurH (Streptococcus pyogenes serotype M18 (strain MGAS8232)).